A 92-amino-acid polypeptide reads, in one-letter code: Large ribosomal subunit protein eL43A (92 aa).

A C4-type zinc finger spans residues 39 to 60 (CSFCGKKTVKRGAAGIWTCSCC). Residue Ser40 is modified to Phosphoserine.

Belongs to the eukaryotic ribosomal protein eL43 family. As to quaternary structure, component of the large ribosomal subunit (LSU). Mature yeast ribosomes consist of a small (40S) and a large (60S) subunit. The 40S small subunit contains 1 molecule of ribosomal RNA (18S rRNA) and 33 different proteins (encoded by 57 genes). The large 60S subunit contains 3 rRNA molecules (25S, 5.8S and 5S rRNA) and 46 different proteins (encoded by 81 genes).

It localises to the cytoplasm. Its function is as follows. Component of the ribosome, a large ribonucleoprotein complex responsible for the synthesis of proteins in the cell. The small ribosomal subunit (SSU) binds messenger RNAs (mRNAs) and translates the encoded message by selecting cognate aminoacyl-transfer RNA (tRNA) molecules. The large subunit (LSU) contains the ribosomal catalytic site termed the peptidyl transferase center (PTC), which catalyzes the formation of peptide bonds, thereby polymerizing the amino acids delivered by tRNAs into a polypeptide chain. The nascent polypeptides leave the ribosome through a tunnel in the LSU and interact with protein factors that function in enzymatic processing, targeting, and the membrane insertion of nascent chains at the exit of the ribosomal tunnel. The chain is Large ribosomal subunit protein eL43A from Saccharomyces cerevisiae (strain ATCC 204508 / S288c) (Baker's yeast).